Reading from the N-terminus, the 75-residue chain is Transaldolase (75 aa).

This sequence belongs to the transaldolase family. Type 1 subfamily. Homodimer. Phosphorylated. Predominantly expressed in Y-organs.

Its subcellular location is the cytoplasm. The enzyme catalyses D-sedoheptulose 7-phosphate + D-glyceraldehyde 3-phosphate = D-erythrose 4-phosphate + beta-D-fructose 6-phosphate. The protein operates within carbohydrate degradation; pentose phosphate pathway; D-glyceraldehyde 3-phosphate and beta-D-fructose 6-phosphate from D-ribose 5-phosphate and D-xylulose 5-phosphate (non-oxidative stage): step 2/3. Its function is as follows. Transaldolase is important for the balance of metabolites in the pentose-phosphate pathway. May play a role in the conversion of sterols into ecdysteroids via NADPH. The chain is Transaldolase from Carcinus maenas (Common shore crab).